The following is a 564-amino-acid chain: Laccase-22 (564 aa).

The signal sequence occupies residues 1 to 25; sequence MAVLPESRRLSLLLMAACFLLQALS. 2 consecutive Plastocyanin-like domains span residues 36-152 and 162-314; these read NVVM…PKLG and KEAV…YANT. Residues N41 and N82 are each glycosylated (N-linked (GlcNAc...) asparagine). Cu cation is bound by residues H86 and H88. The N-linked (GlcNAc...) asparagine glycan is linked to N118. The Cu cation site is built by H131 and H133. N-linked (GlcNAc...) asparagine glycosylation is found at N191, N302, N331, N379, N389, N424, N437, and N447. A Plastocyanin-like 3 domain is found at 414–548; it reads DFPATPLHKF…KMAFVVDNGK (135 aa). The Cu cation site is built by H465, H468, H470, H527, C528, H529, and H533.

This sequence belongs to the multicopper oxidase family. It depends on Cu cation as a cofactor.

It is found in the secreted. It localises to the extracellular space. Its subcellular location is the apoplast. It carries out the reaction 4 hydroquinone + O2 = 4 benzosemiquinone + 2 H2O. Its function is as follows. Lignin degradation and detoxification of lignin-derived products. The polypeptide is Laccase-22 (LAC22) (Oryza sativa subsp. japonica (Rice)).